Here is a 331-residue protein sequence, read N- to C-terminus: Tagatose 1,6-diphosphate aldolase 2 (331 aa).

It belongs to the aldolase LacD family.

The enzyme catalyses D-tagatofuranose 1,6-bisphosphate = D-glyceraldehyde 3-phosphate + dihydroxyacetone phosphate. Its pathway is carbohydrate metabolism; D-tagatose 6-phosphate degradation; D-glyceraldehyde 3-phosphate and glycerone phosphate from D-tagatose 6-phosphate: step 2/2. In Enterococcus faecalis (strain ATCC 700802 / V583), this protein is Tagatose 1,6-diphosphate aldolase 2 (lacD2).